The chain runs to 372 residues: MVGSLACHILALPSLHFLVSLTGMSRPSFIEFTPAADSSDLWKDGQQQPQQEKAEPVLDGAAARAFYEALIADDSSSSKPQRAEPMRERKKKRRRVTREPAAAGVPRQGRALEDEDRMAQWILLAAQNGDLTELRRLLEPQEAGGAGGNINARDAFWWTPLMCAARAGQGAAVRYLLGRGAAWVGVCDLGGRDAAQLAEEAGFPEVARMVRESHGETRSPENQNRSTPSSSQFCEDCGAHFEDSNHHTSTAHLLSLSRRPQPSNLPLGVPTSSPGFRLLLRGGWEPGMGLGPRGEGRANPIPTILKRDQEGLGYRSPPQPRVTHFAARDTRAVSGRERVPRVATLSQRENRRQEEKGRAWERDLRLYMNLEF.

The interval 74-110 is disordered; that stretch reads DSSSSKPQRAEPMRERKKKRRRVTREPAAAGVPRQGR. ANK repeat units lie at residues 124 to 155 and 156 to 186; these read LAAQ…ARDA and FWWT…WVGV. Disordered regions lie at residues 211 to 233 and 251 to 271; these read RESH…SSQF and AHLL…GVPT. Residues 220 to 233 are compositionally biased toward polar residues; the sequence is PENQNRSTPSSSQF. One can recognise a G-patch domain in the interval 271-317; it reads TSSPGFRLLLRGGWEPGMGLGPRGEGRANPIPTILKRDQEGLGYRSP. Lysine 306 is covalently cross-linked (Glycyl lysine isopeptide (Lys-Gly) (interchain with G-Cter in SUMO2)). Composition is skewed to basic and acidic residues over residues 330–340 and 348–357; these read TRAVSGRERVP and RENRRQEEKG. Positions 330-357 are disordered; it reads TRAVSGRERVPRVATLSQRENRRQEEKG.

The protein is G patch domain and ankyrin repeat-containing protein 1 (Gpank1) of Mus musculus (Mouse).